Consider the following 198-residue polypeptide: Holliday junction branch migration complex subunit RuvA (198 aa).

A domain I region spans residues 1–63 (MIALLTGQIA…EDAIQLYGFR (63 aa)). Positions 64 to 142 (TSLEKSFFQL…KLDLSSVVVP (79 aa)) are domain II. The segment at 143-153 (EPRQMPEDDLL) is flexible linker. The segment at 153–198 (LEDVVSALLNLGYKEPQVRKVLAGLNPGSDASLEGVLKQALKSLMR) is domain III.

Belongs to the RuvA family. In terms of assembly, homotetramer. Forms an RuvA(8)-RuvB(12)-Holliday junction (HJ) complex. HJ DNA is sandwiched between 2 RuvA tetramers; dsDNA enters through RuvA and exits via RuvB. An RuvB hexamer assembles on each DNA strand where it exits the tetramer. Each RuvB hexamer is contacted by two RuvA subunits (via domain III) on 2 adjacent RuvB subunits; this complex drives branch migration. In the full resolvosome a probable DNA-RuvA(4)-RuvB(12)-RuvC(2) complex forms which resolves the HJ.

It is found in the cytoplasm. The RuvA-RuvB-RuvC complex processes Holliday junction (HJ) DNA during genetic recombination and DNA repair, while the RuvA-RuvB complex plays an important role in the rescue of blocked DNA replication forks via replication fork reversal (RFR). RuvA specifically binds to HJ cruciform DNA, conferring on it an open structure. The RuvB hexamer acts as an ATP-dependent pump, pulling dsDNA into and through the RuvAB complex. HJ branch migration allows RuvC to scan DNA until it finds its consensus sequence, where it cleaves and resolves the cruciform DNA. In Pelobacter propionicus (strain DSM 2379 / NBRC 103807 / OttBd1), this protein is Holliday junction branch migration complex subunit RuvA.